We begin with the raw amino-acid sequence, 911 residues long: MEVNCLTLKDLISRPPRLDFAIEDGENAQKENIFVDLSRMAPKTPIKNEPIDLSKQKIFTPERNPITPVKLVDRQQVEPWTPTANLKILISAASPDIRDREKKKELFRPIENKDDVFTDSLQLDAVDDSAVDEFEKQRPSRKQKSLGLLCQKFLARYPSYPLSTEKTTISLDEVAVSLGVERRRIYDIVNVLESLHLVSRVAKNQYSWHGRHSLPKTLRNLQRLGEKQKYEEQMAHLQQKELNPIDHKSGERRRDGCPDSQDPQLLDFPEPDCPSSSANSRKDKSLKIMSQKFVMLFLVSKTKIVTLDVAAKILIEESQDIPDHSKFKTKVRRLYDIANVLTSLMLIKKVHVTEDRGRKPAFKWIGPVDFSSTDDDLVDVSTPVLPELKKEIYGHVQFCAKQKLARHSSFNSEQASERTQRKVNSEPSSPYRQKQGLGVYSLEIGSLAAVSRQKMEDNSETVAFASQNMMPLPSSLDPAAPLPSPSVDSEYRVSPLCHQALSAAQTDLKALPAQNGLNGQGGVSLASMALDVEHQPQPLAAAQPLLYVPPAPLFMLCGGLQEGLSPGSGSGSGSVGGGSEVTAAEQPPMPSGQKRLSKERRLQEEEEEPATKRQCRDHEDGPLSLVMPKKPSDSADIASPKTSENRASAPHEDTHMNGQLSAAKAVSGKATTNGFVSSEWGNPCSNTEIEKPSEENESTKGPSPLQYLYVQPPAGLNGLSVLLPSSQSPHAVGLPVGPLPSLSIQYMVLPSPALSGFPVLCSPTMPGPVSSAPSPLPNVGPVNFGLPGLGSTAHLLIGPAAMVNPKSSTLPSTDPQLQGPCSLHLSPVMSRSHGSVQPGSPAYGSLPAATVKLQQSPVPVTPKSIRCTHQETFFKTPGSLGDPVLRRKERNQSRSSSSAQRRLEISSGGTD.

Serine 94 carries the post-translational modification Phosphoserine. Residues 141–210 mediate DNA binding; sequence RKQKSLGLLC…VAKNQYSWHG (70 aa). Disordered regions lie at residues 239–281, 409–433, and 565–706; these read QKEL…ANSR, SFNSEQASERTQRKVNSEPSSPYRQ, and SPGS…SPLQ. Residues 243–257 are compositionally biased toward basic and acidic residues; it reads NPIDHKSGERRRDGC. The DNA-binding element occupies 281 to 366; the sequence is RKDKSLKIMS…GRKPAFKWIG (86 aa). Phosphoserine is present on serine 409. Residues 415 to 424 show a composition bias toward basic and acidic residues; it reads ASERTQRKVN. Residues 566–579 show a composition bias toward gly residues; sequence PGSGSGSGSVGGGS. Over residues 599–621 the composition is skewed to basic and acidic residues; the sequence is ERRLQEEEEEPATKRQCRDHEDG. Residues 669-687 are compositionally biased toward polar residues; it reads KATTNGFVSSEWGNPCSNT. Positions 688 to 698 are enriched in basic and acidic residues; that stretch reads EIEKPSEENES. Residue serine 840 is modified to Phosphoserine. Residues 873–911 form a disordered region; the sequence is FFKTPGSLGDPVLRRKERNQSRSSSSAQRRLEISSGGTD.

The protein belongs to the E2F/DP family. In terms of assembly, homodimer and heterodimer: mainly forms homodimers and, to a lesser extent, heterodimers with E2F8. Dimerization is important for DNA-binding. Interacts with HIF1A. Interacts with MN1.

The protein resides in the nucleus. Functionally, atypical E2F transcription factor that participates in various processes such as angiogenesis, polyploidization of specialized cells and DNA damage response. Mainly acts as a transcription repressor that binds DNA independently of DP proteins and specifically recognizes the E2 recognition site 5'-TTTC[CG]CGC-3'. Directly represses transcription of classical E2F transcription factors such as E2F1. Acts as a regulator of S-phase by recognizing and binding the E2-related site 5'-TTCCCGCC-3' and mediating repression of G1/S-regulated genes. Plays a key role in polyploidization of cells in placenta and liver by regulating the endocycle, probably by repressing genes promoting cytokinesis and antagonizing action of classical E2F proteins (E2F1, E2F2 and/or E2F3). Required for placental development by promoting polyploidization of trophoblast giant cells. Also involved in DNA damage response: up-regulated by p53/TP53 following genotoxic stress and acts as a downstream effector of p53/TP53-dependent repression by mediating repression of indirect p53/TP53 target genes involved in DNA replication. Acts as a promoter of sprouting angiogenesis, possibly by acting as a transcription activator: associates with HIF1A, recognizes and binds the VEGFA promoter, which is different from canonical E2 recognition site, and activates expression of the VEGFA gene. Acts as a negative regulator of keratinocyte differentiation. This chain is Transcription factor E2F7 (E2F7), found in Bos taurus (Bovine).